The chain runs to 449 residues: MEHPLECADSCSLAMSWFCNKKCRGWGLMKRTVVASGLRSVVLLLLFIYFVQDVTAEMGHQRISGSAGDVLEDNPVGRLKVFIYDIPSKYNTDWLKKDPRCLTHMFAVEEYLHDFLTESPVRTLNPEEADWFYTPVYTTCDLTPNGLPLPFKSPRVMRSAISYISSHWPYWNRTDGADHFFVVPHDFAACFHYQEEKAIERGILPLLKRATLIQTFGQNHHVCLKEDSIVIPPYAPPERMQTRLNPPSTPRSIFAYFRGLFYDPGNDPEGGYYARGARAAIWENFKDNPLFDISTEHPATYYEDMQRAIFCLCPLGWAPWSPRLVEGVIFGCIPVIIADDIVLPFADAIPWEKIGVFVEEKDVPILDKILCTINHEEVLEKQRLLANPAMKQAMLFPRPAKPGDAFHQILNGLARKLPHDPSIYLQPGQSFLNWTEGPPGDLYPWGNDL.

Over 1-31 (MEHPLECADSCSLAMSWFCNKKCRGWGLMKR) the chain is Cytoplasmic. The helical; Signal-anchor for type II membrane protein transmembrane segment at 32-52 (TVVASGLRSVVLLLLFIYFVQ) threads the bilayer. Topologically, residues 53–449 (DVTAEMGHQR…GDLYPWGNDL (397 aa)) are lumenal. Asn172 and Asn433 each carry an N-linked (GlcNAc...) asparagine glycan.

The protein belongs to the glycosyltransferase 47 family. Mostly expressed in newly formed or expanding tissues.

The protein resides in the golgi apparatus membrane. In terms of biological role, involved in the synthesis of glucuronoxylan hemicellulose in secondary cell walls. The protein is Probable glucuronosyltransferase 47 A of Physcomitrium patens (Spreading-leaved earth moss).